Here is a 60-residue protein sequence, read N- to C-terminus: Large ribosomal subunit protein bL32 (60 aa).

It belongs to the bacterial ribosomal protein bL32 family.

The sequence is that of Large ribosomal subunit protein bL32 from Clostridium perfringens (strain ATCC 13124 / DSM 756 / JCM 1290 / NCIMB 6125 / NCTC 8237 / Type A).